A 529-amino-acid chain; its full sequence is Type I restriction enzyme StySJI methylase subunit (529 aa).

Residues 148–153 (QYFTPR), 178–180 (TAG), and Glu216 contribute to the S-adenosyl-L-methionine site. Positions 405–444 (YGEDPHGLSPREEGEWSFNAEESEVADSEENKNTDQHQAT) are disordered. Over residues 407 to 418 (EDPHGLSPREEG) the composition is skewed to basic and acidic residues.

Belongs to the N(4)/N(6)-methyltransferase family. As to quaternary structure, the type I restriction/modification system is composed of three polypeptides R, M and S; the restriction enzyme has stoichiometry R(2)M(2)S(1) while the methyltransferase is M(2)S(1).

The enzyme catalyses a 2'-deoxyadenosine in DNA + S-adenosyl-L-methionine = an N(6)-methyl-2'-deoxyadenosine in DNA + S-adenosyl-L-homocysteine + H(+). In terms of biological role, the subtype gamma methyltransferase (M) subunit of a type I restriction enzyme. The M and S subunits together form a methyltransferase (MTase) that methylates two adenine residues of the sequence 5'-GAGN(6)GTRC-3'. In the presence of the R subunit the complex can also act as an endonuclease, binding to the same target sequence but cutting the DNA some distance from this site. Whether the DNA is cut or modified depends on the methylation state of the target sequence. When the target site is unmodified, the DNA is cut. When the target site is hemimethylated, the complex acts as a maintenance MTase modifying the DNA so that both strands become methylated. After locating a non-methylated recognition site, the enzyme complex serves as a molecular motor that translocates DNA in an ATP-dependent manner until a collision occurs that triggers cleavage. This Salmonella typhimurium (strain LT2 / SGSC1412 / ATCC 700720) protein is Type I restriction enzyme StySJI methylase subunit.